The following is a 445-amino-acid chain: Lipid A 1-phosphatase (445 aa).

The first 22 residues, 1 to 22, serve as a signal peptide directing secretion; that stretch reads MNRESFLLLLVLLFALPLHLQA.

The protein localises to the periplasm. The protein operates within bacterial outer membrane biogenesis; LPS lipid A biosynthesis. Functionally, removes the 1-phosphate group from lipid A species. Absence of phosphate groups in lipid A renders the bacteria resistant to host-derived cationic antimicrobial peptides (CAMP) and allowing it to camouflage itself from the host innate immune response. The sequence is that of Lipid A 1-phosphatase from Porphyromonas gingivalis (strain ATCC 33277 / DSM 20709 / CIP 103683 / JCM 12257 / NCTC 11834 / 2561).